Here is a 455-residue protein sequence, read N- to C-terminus: MTLTQEFDTIAAISTPLGEGAIAIVRLSGTDALKIAQSVYKGKNLTQVASHTINYGHIFEEKRLVDEVMVSVMRAPKTFTREDIVEINTHGGIAVTQEILQLLLRNGARLAEPGEFTKRAFLNGRIDLAQAESVMDLIRAKTDKAANIAVKQLDGSLSKMINNIRQEILESLAQVEVNIDYPEYDDVETMTSQMLLEKTAHFEQLLENLLSTAKRGKILREGLKTAIIGRPNVGKSSLLNQLLREEKAIVTDIAGTTRDVITEFANIGGVPLELVDTAGIRETDDLVEAIGVERSKKALAEADLVLLVLDASNELTDKDLELLELSKNSNRIVLLNKTDLPEKIDSTQISGDFIRISALKNENLNAVEEKINQIFFAGEIEAKDATVLSNARHISIVEEALKALKEANSGLALGLPVDLIQVDVTRCWQLLGEITGEAAPDELITQLFSQFCLGK.

Residues Arg26, Glu86, and Arg125 each contribute to the (6S)-5-formyl-5,6,7,8-tetrahydrofolate site. The TrmE-type G domain maps to 222–376 (GLKTAIIGRP…VEEKINQIFF (155 aa)). Residue Asn232 participates in K(+) binding. GTP is bound by residues 232–237 (NVGKSS), 251–257 (TDIAGTT), and 276–279 (DTAG). A Mg(2+)-binding site is contributed by Ser236. Positions 251, 253, and 256 each coordinate K(+). Mg(2+) is bound at residue Thr257. Lys455 serves as a coordination point for (6S)-5-formyl-5,6,7,8-tetrahydrofolate.

The protein belongs to the TRAFAC class TrmE-Era-EngA-EngB-Septin-like GTPase superfamily. TrmE GTPase family. Homodimer. Heterotetramer of two MnmE and two MnmG subunits. K(+) is required as a cofactor.

It is found in the cytoplasm. Its function is as follows. Exhibits a very high intrinsic GTPase hydrolysis rate. Involved in the addition of a carboxymethylaminomethyl (cmnm) group at the wobble position (U34) of certain tRNAs, forming tRNA-cmnm(5)s(2)U34. The polypeptide is tRNA modification GTPase MnmE (Lactococcus lactis subsp. lactis (strain IL1403) (Streptococcus lactis)).